We begin with the raw amino-acid sequence, 240 residues long: Serine protease SplB (240 aa).

An N-terminal signal peptide occupies residues 1–36 (MNKNVVIKSLATLTILTSVTGIGTTLVEEVQQTAKA). Residues histidine 75, aspartate 113, and serine 193 each act as charge relay system in the active site.

It belongs to the peptidase S1B family.

It localises to the secreted. Functionally, serine protease that cleaves specifically after the sequence Trp-Glu-Leu-Gln. This is Serine protease SplB (splB) from Staphylococcus aureus (strain Mu3 / ATCC 700698).